The sequence spans 1194 residues: Rho-associated protein kinase let-502 (1194 aa).

Residues 68–330 (FRQLKVIGRG…VDEIRNHKFF (263 aa)) enclose the Protein kinase domain. ATP-binding positions include 74–82 (IGRGAFGEV) and Lys97. The Proton acceptor role is filled by Asp190. The AGC-kinase C-terminal domain occupies 331-402 (KNDEWTFETL…SNEYSPVKKL (72 aa)). Coiled-coil stretches lie at residues 436–844 (EEQY…MAKR) and 875–933 (GRIL…EYPQ). The RhoBD domain occupies 784 to 846 (EQNLKHIENQ…LEEEMAKRQP (63 aa)). In terms of domain architecture, PH spans 961 to 1171 (IQIDGWLSLR…SQLRRFIEAS (211 aa)). A Phorbol-ester/DAG-type zinc finger spans residues 1085–1138 (RHDFQELSYHTRTYCDDCGKKLSDFIRPTPAFECKNCHYKTHKEHIAQGTITMC).

The protein belongs to the protein kinase superfamily. AGC Ser/Thr protein kinase family. As to quaternary structure, interacts with rho-1. Mg(2+) is required as a cofactor.

The protein localises to the cytoplasm. The protein resides in the cytoskeleton. Its subcellular location is the cleavage furrow. The catalysed reaction is L-seryl-[protein] + ATP = O-phospho-L-seryl-[protein] + ADP + H(+). It catalyses the reaction L-threonyl-[protein] + ATP = O-phospho-L-threonyl-[protein] + ADP + H(+). Its activity is regulated as follows. Activated by rho-1 binding. Negatively regulates mel-11 to relieve the inhibition of mlc-4, allowing contraction of the circumferentially oriented microfilaments in epidermal cells and thereby regulating myosin II contractility during spermathecal contraction, cleavage furrow contraction in early embryos, and embryonic elongation and morphogenesis. Required for P-cell migration. May also play a role in oocyte cellularization. The chain is Rho-associated protein kinase let-502 from Caenorhabditis briggsae.